The chain runs to 95 residues: Large ribosomal subunit protein bL27 (95 aa).

A propeptide spanning residues 1–12 (MLLIKKINLQFF) is cleaved from the precursor. The interval 17 to 37 (GVGSTKNGRDSNPKYLGAKKS) is disordered.

This sequence belongs to the bacterial ribosomal protein bL27 family. Post-translationally, the N-terminus is cleaved by ribosomal processing cysteine protease Prp.

This is Large ribosomal subunit protein bL27 from Malacoplasma penetrans (strain HF-2) (Mycoplasma penetrans).